The following is a 99-amino-acid chain: U1-theraphotoxin-Lsp1b (99 aa).

Positions 1–23 (MRSLTLAALLLCSLLLVFHTSAA) are cleaved as a signal peptide. A propeptide spanning residues 24 to 50 (EELQAQEGHLMIPGDTDTALETVDDER) is cleaved from the precursor. 4 disulfide bridges follow: C54-C67, C58-C91, C72-C74, and C85-C96.

The protein belongs to the neurotoxin 12 (Hwtx-2) family. 04 (lasiotoxin) subfamily. In terms of tissue distribution, expressed by the venom gland.

It is found in the secreted. Functionally, toxin that causes irreversible contractile paralysis into adult Aedes aegypti resulting in 100% mortality after 24 hours. This is U1-theraphotoxin-Lsp1b from Lasiodora sp. (strain IBSP 8539) (Brazilian salmon pink birdeater).